A 135-amino-acid chain; its full sequence is 2-iminobutanoate/2-iminopropanoate deaminase (135 aa).

Ser2 bears the N-acetylserine mark. N6-succinyllysine occurs at positions 13, 60, 67, and 134.

Belongs to the RutC family. As to quaternary structure, homotrimer. Interacts with YTHDF2. As to expression, expressed predominantly in liver and kidney. Lower levels in lung and brain.

The protein resides in the cytoplasm. It is found in the nucleus. It localises to the peroxisome. The protein localises to the mitochondrion. The enzyme catalyses 2-iminobutanoate + H2O = 2-oxobutanoate + NH4(+). It carries out the reaction 2-iminopropanoate + H2O = pyruvate + NH4(+). Functionally, catalyzes the hydrolytic deamination of enamine/imine intermediates that form during the course of normal metabolism. May facilitate the release of ammonia from these potentially toxic reactive metabolites, reducing their impact on cellular components. It may act on enamine/imine intermediates formed by several types of pyridoxal-5'-phosphate-dependent dehydratases including L-threonine dehydratase. Also promotes endoribonucleolytic cleavage of some transcripts by promoting recruitment of the ribonuclease P/MRP complex. Acts by bridging YTHDF2 and the ribonuclease P/MRP complex. RIDA/HRSP12 binds to N6-methyladenosine (m6A)-containing mRNAs containing a 5'-GGUUC-3' motif: cooperative binding of RIDA/HRSP12 and YTHDF2 to such transcripts lead to recruitment of the ribonuclease P/MRP complex and subsequent endoribonucleolytic cleavage. In Mus musculus (Mouse), this protein is 2-iminobutanoate/2-iminopropanoate deaminase.